The primary structure comprises 226 residues: Orotidine 5'-phosphate decarboxylase (226 aa).

Residues Asp-9, Lys-31, 58–67, Thr-115, Arg-176, Gln-184, Gly-204, and Arg-205 each bind substrate; that span reads DLKLYDIPNT. Lys-60 acts as the Proton donor in catalysis.

This sequence belongs to the OMP decarboxylase family. Type 1 subfamily. As to quaternary structure, homodimer.

It catalyses the reaction orotidine 5'-phosphate + H(+) = UMP + CO2. The protein operates within pyrimidine metabolism; UMP biosynthesis via de novo pathway; UMP from orotate: step 2/2. Catalyzes the decarboxylation of orotidine 5'-monophosphate (OMP) to uridine 5'-monophosphate (UMP). This chain is Orotidine 5'-phosphate decarboxylase, found in Wolbachia pipientis subsp. Culex pipiens (strain wPip).